Here is a 295-residue protein sequence, read N- to C-terminus: Pyridoxal 5'-phosphate synthase subunit PdxS (295 aa).

Asp25 serves as a coordination point for D-ribose 5-phosphate. Residue Lys82 is the Schiff-base intermediate with D-ribose 5-phosphate of the active site. Position 154 (Gly154) interacts with D-ribose 5-phosphate. Residue Arg166 participates in D-glyceraldehyde 3-phosphate binding. D-ribose 5-phosphate-binding positions include Gly215 and Gly236–Ser237.

This sequence belongs to the PdxS/SNZ family. In the presence of PdxT, forms a dodecamer of heterodimers.

The catalysed reaction is aldehydo-D-ribose 5-phosphate + D-glyceraldehyde 3-phosphate + L-glutamine = pyridoxal 5'-phosphate + L-glutamate + phosphate + 3 H2O + H(+). Its pathway is cofactor biosynthesis; pyridoxal 5'-phosphate biosynthesis. Its function is as follows. Catalyzes the formation of pyridoxal 5'-phosphate from ribose 5-phosphate (RBP), glyceraldehyde 3-phosphate (G3P) and ammonia. The ammonia is provided by the PdxT subunit. Can also use ribulose 5-phosphate and dihydroxyacetone phosphate as substrates, resulting from enzyme-catalyzed isomerization of RBP and G3P, respectively. The polypeptide is Pyridoxal 5'-phosphate synthase subunit PdxS (Bacillus cereus (strain G9842)).